We begin with the raw amino-acid sequence, 565 residues long: Perivitellin-2 67 kDa subunit (565 aa).

Positions 1–26 (MSQLRWWVVSQLLLLIVVCILDHSEG) are cleaved as a signal peptide. Positions 27–340 (ARVCPKIVPG…AKVANLDRLT (314 aa)) constitute an MACPF domain.

In terms of assembly, perivitellin-2 is a heterooctamer of 4 identical 98 kDa heterodimers, each composed of one 31 kDa and one 67 kDa subunits. The 98 kDa heterodimer subunits are held together by disulfide bridges while the heterodimers are assembled into the native perivitellin-2 octamer by non-covalent forces. In terms of processing, glycosylated. Contains four O-linked and one N-linked oligosaccharide bonds. The protein contains 2.5% of carbohydrates (high levels of mannose, galactose, and NAcGlucosamine, and small amounts of NacGalactosamine). Post-translationally, PV2 is a very high density lipoprotein (VHDL). It contains 3.75% of lipids. The major lipid classes are free sterols and phospholipids and also have significant quantities of energy-providing triacylglycerides and free fatty acids. As to expression, produced by albumen secretory cells. Found in developing eggs.

The protein localises to the secreted. Its subcellular location is the target cell membrane. Its function is as follows. The egg defensive protein perivitellin-2 is a pore-forming two-subunit glycoprotein that affects both the nervous and digestive systems of mammals. In addition, it is a source of both structural and energetic molecules during embryonic development. The tachylectin subunit (31 kDa) binds target membranes while the MACPF subunit (67 kDa) disrupts lipid bilayers forming large pores altering the plasma membrance conductance. Both in vivo and in vitro, the protein shows wide pH range stability and is resistant to enzymatic proteolysis from gastrointestinal environments. It specifically binds mature enterocytes but does not cause cell disruption on caco-2 (human colorectal adenocarcinoma cells) or rat intestinal cells. After oral administration to mice, it binds enterocytes and induces large dose-dependent morphological changes on their small intestine mucosa, reducing the absorptive surface. Additionally, it is detected in the Peyer's patches where it activates lymphoid follicles and triggers apoptosis. The toxin can also traverse the intestinal barrier and induce oral adaptive immunity with evidence of circulating antibody response. The toxin also shows hemagglutination properties thanks to the tachylectin subunit, but does not show hemolytic activity. In addition to enterotoxin activity, the toxin also acts as a neurotoxin, since an intraperitoneal injection induces paralysis of the mice rear limbs, followed by death. In Pomacea canaliculata (Golden apple snail), this protein is Perivitellin-2 67 kDa subunit.